The sequence spans 163 residues: Regulator of chromosome segregation (163 aa).

In terms of assembly, interacts with CpsD and ParB.

The protein localises to the cytoplasm. It localises to the nucleoid. It is found in the cell membrane. Functionally, required for cell division and chromosome segregation. Binds to DNA and is involved in segregating the origin of replication (oriC) region to new daughter cells. When the nucleoid is not properly segregated, involved in blocking the cell division to protect the nucleoid against premature truncation by the newly forming septum, a function which is dependent on CpsD and its autophosphorylation level. The polypeptide is Regulator of chromosome segregation (Streptococcus pneumoniae serotype 2 (strain D39 / NCTC 7466)).